A 179-amino-acid chain; its full sequence is Large ribosomal subunit protein uL5 (179 aa).

It belongs to the universal ribosomal protein uL5 family. Part of the 50S ribosomal subunit; part of the 5S rRNA/L5/L18/L25 subcomplex. Contacts the 5S rRNA and the P site tRNA. Forms a bridge to the 30S subunit in the 70S ribosome.

Its function is as follows. This is one of the proteins that bind and probably mediate the attachment of the 5S RNA into the large ribosomal subunit, where it forms part of the central protuberance. In the 70S ribosome it contacts protein S13 of the 30S subunit (bridge B1b), connecting the 2 subunits; this bridge is implicated in subunit movement. Contacts the P site tRNA; the 5S rRNA and some of its associated proteins might help stabilize positioning of ribosome-bound tRNAs. The polypeptide is Large ribosomal subunit protein uL5 (Pseudomonas syringae pv. tomato (strain ATCC BAA-871 / DC3000)).